A 337-amino-acid polypeptide reads, in one-letter code: DNA-directed RNA polymerase subunit alpha (337 aa).

The tract at residues Met-1–Glu-233 is alpha N-terminal domain (alpha-NTD). Positions Phe-249 to Tyr-337 are alpha C-terminal domain (alpha-CTD).

The protein belongs to the RNA polymerase alpha chain family. As to quaternary structure, homodimer. The RNAP catalytic core consists of 2 alpha, 1 beta, 1 beta' and 1 omega subunit. When a sigma factor is associated with the core the holoenzyme is formed, which can initiate transcription.

The enzyme catalyses RNA(n) + a ribonucleoside 5'-triphosphate = RNA(n+1) + diphosphate. In terms of biological role, DNA-dependent RNA polymerase catalyzes the transcription of DNA into RNA using the four ribonucleoside triphosphates as substrates. This is DNA-directed RNA polymerase subunit alpha from Brucella canis (strain ATCC 23365 / NCTC 10854 / RM-666).